Here is a 557-residue protein sequence, read N- to C-terminus: DNA ligase (557 aa).

Glu249 is an ATP binding site. Lys251 functions as the N6-AMP-lysine intermediate in the catalytic mechanism. Residues Arg256, Arg271, Glu301, Phe340, Arg417, and Lys423 each contribute to the ATP site.

The protein belongs to the ATP-dependent DNA ligase family. Mg(2+) is required as a cofactor.

The enzyme catalyses ATP + (deoxyribonucleotide)n-3'-hydroxyl + 5'-phospho-(deoxyribonucleotide)m = (deoxyribonucleotide)n+m + AMP + diphosphate.. Its function is as follows. DNA ligase that seals nicks in double-stranded DNA during DNA replication, DNA recombination and DNA repair. This Methanothermobacter thermautotrophicus (Methanobacterium thermoformicicum) protein is DNA ligase.